Reading from the N-terminus, the 150-residue chain is UPF0756 membrane protein NT05HA_0561 (150 aa).

The next 4 helical transmembrane spans lie at 1–21, 52–72, 81–101, and 128–148; these read MSLQ…LGIF, YGLS…LVSG, AFVS…AWLA, and FLGG…VLIG.

Belongs to the UPF0756 family.

Its subcellular location is the cell membrane. This chain is UPF0756 membrane protein NT05HA_0561, found in Aggregatibacter aphrophilus (strain NJ8700) (Haemophilus aphrophilus).